The primary structure comprises 203 residues: Outer-membrane lipoprotein LolB (203 aa).

The first 20 residues, 1 to 20 (MNRSRRLALLCLGVPLLLQA), serve as a signal peptide directing secretion. Cysteine 21 is lipidated: N-palmitoyl cysteine. A lipid anchor (S-diacylglycerol cysteine) is attached at cysteine 21.

The protein belongs to the LolB family. In terms of assembly, monomer.

It localises to the cell outer membrane. Plays a critical role in the incorporation of lipoproteins in the outer membrane after they are released by the LolA protein. This is Outer-membrane lipoprotein LolB from Cupriavidus taiwanensis (strain DSM 17343 / BCRC 17206 / CCUG 44338 / CIP 107171 / LMG 19424 / R1) (Ralstonia taiwanensis (strain LMG 19424)).